The primary structure comprises 1770 residues: Transposon Ty2-C Gag-Pol polyprotein (1770 aa).

Polar residues-rich tracts occupy residues 1–11 (MESQQLHQNPR), 19–39 (ASVTSKEVPSNQDPLAVSASN), and 49–60 (KVNSQQETTPGT). Disordered stretches follow at residues 1-88 (MESQ…YQQH) and 355-453 (SQYK…LPDH). Residues 295–397 (ENNINVSDRL…SSKPRAAKAH (103 aa)) form an RNA-binding region. Low complexity predominate over residues 369-382 (TSPNTTNTKVTTRN). 2 stretches are compositionally biased toward polar residues: residues 399–408 (IATSSKFSRV) and 415–435 (ESTVSSQYLSDDNELSLGQQQ). D457 (for protease activity; shared with dimeric partner) is an active-site residue. The interval 579–636 (NVNKSKSVNKYPYPLIHRMLGHANFRSIQKSLKKNAVTYLKESDIEWSNASTYQCPDC) is integrase-type zinc finger-like. Positions 656-831 (ESYEPFQYLH…AGLDITTILP (176 aa)) constitute an Integrase catalytic domain. Mg(2+)-binding residues include D667 and D732. Disordered stretches follow at residues 1003 to 1038 (EMGGTVESDTTSPRHSSTFTARNQKRPGSPNDMIDL) and 1057 to 1205 (GGTE…TEIE). 2 stretches are compositionally biased toward polar residues: residues 1009–1024 (ESDTTSPRHSSTFTAR) and 1065–1082 (QRNSDTNIKYRTTNSTPS). Residues 1193-1227 (KKRSLEDNETEIEVSRDTWNNKNMRSLEPPRSKKR) carry the Bipartite nuclear localization signal motif. The Reverse transcriptase Ty1/copia-type domain maps to 1353 to 1491 (NDYYITQLDI…DILGLEIKYQ (139 aa)). 6 residues coordinate Mg(2+): D1361, D1442, D1443, D1625, E1667, and D1700. The 143-residue stretch at 1625–1767 (DASYGNQPYY…IKTFKLLTNK (143 aa)) folds into the RNase H Ty1/copia-type domain.

In terms of assembly, the capsid protein forms a homotrimer, from which the VLPs are assembled. The protease is a homodimer, whose active site consists of two apposed aspartic acid residues. Post-translationally, initially, virus-like particles (VLPs) are composed of the structural unprocessed proteins Gag and Gag-Pol, and also contain the host initiator methionine tRNA (tRNA(i)-Met) which serves as a primer for minus-strand DNA synthesis, and a dimer of genomic Ty RNA. Processing of the polyproteins occurs within the particle and proceeds by an ordered pathway, called maturation. First, the protease (PR) is released by autocatalytic cleavage of the Gag-Pol polyprotein, and this cleavage is a prerequisite for subsequent processing at the remaining sites to release the mature structural and catalytic proteins. Maturation takes place prior to the RT reaction and is required to produce transposition-competent VLPs.

It localises to the cytoplasm. The protein localises to the nucleus. The enzyme catalyses DNA(n) + a 2'-deoxyribonucleoside 5'-triphosphate = DNA(n+1) + diphosphate. It catalyses the reaction Endonucleolytic cleavage to 5'-phosphomonoester.. Capsid protein (CA) is the structural component of the virus-like particle (VLP), forming the shell that encapsulates the retrotransposons dimeric RNA genome. The particles are assembled from trimer-clustered units and there are holes in the capsid shells that allow for the diffusion of macromolecules. CA also has nucleocapsid-like chaperone activity, promoting primer tRNA(i)-Met annealing to the multipartite primer-binding site (PBS), dimerization of Ty2 RNA and initiation of reverse transcription. Functionally, the aspartyl protease (PR) mediates the proteolytic cleavages of the Gag and Gag-Pol polyproteins after assembly of the VLP. In terms of biological role, reverse transcriptase/ribonuclease H (RT) is a multifunctional enzyme that catalyzes the conversion of the retro-elements RNA genome into dsDNA within the VLP. The enzyme displays a DNA polymerase activity that can copy either DNA or RNA templates, and a ribonuclease H (RNase H) activity that cleaves the RNA strand of RNA-DNA heteroduplexes during plus-strand synthesis and hydrolyzes RNA primers. The conversion leads to a linear dsDNA copy of the retrotransposon that includes long terminal repeats (LTRs) at both ends. Its function is as follows. Integrase (IN) targets the VLP to the nucleus, where a subparticle preintegration complex (PIC) containing at least integrase and the newly synthesized dsDNA copy of the retrotransposon must transit the nuclear membrane. Once in the nucleus, integrase performs the integration of the dsDNA into the host genome. The chain is Transposon Ty2-C Gag-Pol polyprotein (TY2B-C) from Saccharomyces cerevisiae (strain ATCC 204508 / S288c) (Baker's yeast).